The primary structure comprises 119 residues: Acidic phospholipase A2 natratoxin (119 aa).

Intrachain disulfides connect C11-C71, C26-C118, C28-C44, C43-C99, C50-C92, C60-C85, and C78-C90. Ca(2+)-binding residues include Y27, G29, and G31. H47 is a catalytic residue. D48 serves as a coordination point for Ca(2+). Residue D93 is part of the active site.

It belongs to the phospholipase A2 family. Group I subfamily. D49 sub-subfamily. The cofactor is Ca(2+). As to expression, expressed by the venom gland.

Its subcellular location is the secreted. It catalyses the reaction a 1,2-diacyl-sn-glycero-3-phosphocholine + H2O = a 1-acyl-sn-glycero-3-phosphocholine + a fatty acid + H(+). Functionally, snake venom phospholipase A2 (PLA2) that has an effectively inhibitory effect on A-type K(+) currents (Kv/KCN) in acutely dissociated rat dorsal root ganglion (DRG) neurons. This inhibitory effect is independent of its enzymatic activity. PLA2 catalyzes the calcium-dependent hydrolysis of the 2-acyl groups in 3-sn-phosphoglycerides. The protein is Acidic phospholipase A2 natratoxin of Naja atra (Chinese cobra).